Consider the following 196-residue polypeptide: Putative adenylate kinase (196 aa).

ATP is bound by residues G10, G12, K13, T14, and S15. Residues 30–53 (YLNDLIKEEHLYSEVDEERDSVIA) are NMP. The LID stretch occupies residues 118 to 128 (KRGYSEEKINE). R119 contributes to the ATP binding site.

Belongs to the adenylate kinase family. AK6 subfamily. As to quaternary structure, interacts with uS11. Not a structural component of 40S pre-ribosomes, but transiently interacts with them by binding to uS11.

The enzyme catalyses AMP + ATP = 2 ADP. It carries out the reaction ATP + H2O = ADP + phosphate + H(+). Broad-specificity nucleoside monophosphate (NMP) kinase that catalyzes the reversible transfer of the terminal phosphate group between nucleoside triphosphates and monophosphates. Also has ATPase activity. Involved in the late maturation steps of the 30S ribosomal particles, specifically 16S rRNA maturation. While NMP activity is not required for ribosome maturation, ATPase activity is. Associates transiently with small ribosomal subunit protein uS11. ATP hydrolysis breaks the interaction with uS11. May temporarily remove uS11 from the ribosome to enable a conformational change of the ribosomal RNA that is needed for the final maturation step of the small ribosomal subunit. In Methanosarcina mazei (strain ATCC BAA-159 / DSM 3647 / Goe1 / Go1 / JCM 11833 / OCM 88) (Methanosarcina frisia), this protein is Putative adenylate kinase.